The following is a 31-amino-acid chain: Zinc metalloproteinase alsophinase (31 aa).

Gln1 is modified (pyrrolidone carboxylic acid). Residues 9–31 (KYIEFYLVVDNGMFXKYSXXFTV) form the Peptidase M12B domain. Glu12 is a binding site for Ca(2+).

Monomer. Requires Zn(2+) as cofactor. In terms of processing, contains 9 disulfide bonds. As to expression, expressed by the venom gland.

It localises to the secreted. With respect to regulation, inhibited by 1,10-phenanthroline. Snake venom zinc metalloprotease that has potent hemorrhagic activity, fibrinogenolytic activity on the alpha-subunit of human fibrinogen (FGA) in vitro and provokes necrosis in skin, muscle and lung tissues. May contribute to local edema and ecchymosis induced by venom. Hydrolyzes model substrate (beta-chain of insulin) at Ala(14)-Leu(15). The sequence is that of Zinc metalloproteinase alsophinase from Borikenophis portoricensis (Puerto Rican racer).